A 636-amino-acid chain; its full sequence is NADP-dependent malic enzyme, chloroplastic (636 aa).

The interval 1-28 (MLSTRTAAVAASASPASPWKLGGRSEGG) is disordered. A chloroplast-targeting transit peptide spans 1–62 (MLSTRTAAVA…LPPRRVDAVA (62 aa)). Positions 7–18 (AAVAASASPASP) are enriched in low complexity. Tyrosine 184 functions as the Proton donor in the catalytic mechanism. Arginine 237 serves as a coordination point for NAD(+). The active-site Proton acceptor is the lysine 255. A divalent metal cation contacts are provided by glutamate 327, aspartate 328, and aspartate 351. Aspartate 351 serves as a coordination point for NAD(+). 380–396 (LFLGAGEAGTGIAELIA) contributes to the NADP(+) binding site. Asparagine 492 contributes to the NAD(+) binding site.

Belongs to the malic enzymes family. In terms of assembly, homotetramer. Mg(2+) is required as a cofactor. Requires Mn(2+) as cofactor.

The protein resides in the plastid. It localises to the chloroplast. The catalysed reaction is (S)-malate + NADP(+) = pyruvate + CO2 + NADPH. It carries out the reaction oxaloacetate + H(+) = pyruvate + CO2. It participates in photosynthesis; C4 acid pathway. Its function is as follows. The chloroplastic ME isoform decarboxylates malate shuttled from neighboring mesophyll cells. The CO(2) released is then refixed by ribulose-bisphosphate carboxylase. This pathway eliminates the photorespiratory loss of CO(2) that occurs in most plants. This is NADP-dependent malic enzyme, chloroplastic (MOD1) from Zea mays (Maize).